The sequence spans 1550 residues: Adhesion G protein-coupled receptor L3 (1550 aa).

The first 19 residues, 1–19 (MCPPQLFILMMLLAPVVHG), serve as a signal peptide directing secretion. Residues 20–948 (GKHNERHPAL…VHDLLLDVIT (929 aa)) are Extracellular-facing. The disordered stretch occupies residues 34-80 (RHAEHSPGGPLPPRHLLQQPAAERSTAHRGQGPRGTARGVRGPGAPG). The 90-residue stretch at 103 to 192 (SCESYPIELR…KYLEVQYECV (90 aa)) folds into the SUEL-type lectin domain. 5 disulfide bridges follow: Cys104-Cys134, Cys113-Cys191, Cys146-Cys178, Cys159-Cys165, and Cys203-Cys385. A glycan (N-linked (GlcNAc...) asparagine) is linked at Asn161. One can recognise an Olfactomedin-like domain in the interval 202–461 (LCPGLLKGVY…VVKYSLDFGP (260 aa)). Positions 317–347 (YHDTSPYRWGGKSDIDLAVDENGLWVIYATE) are interaction with FLRT3. Ca(2+) is bound by residues Asp332, Asn380, Ala381, and Val435. Positions 518–538 (NLGRSTTPSLPGRRNRSTSTP) are disordered. N-linked (GlcNAc...) asparagine glycosylation is found at Asn532, Asn616, Asn839, Asn884, and Asn910. The 180-residue stretch at 755 to 934 (DIVRENTDNI…AVLMAHVEVK (180 aa)) folds into the GAIN-B domain. Disulfide bonds link Cys885–Cys916 and Cys904–Cys918. The tract at residues 885–934 (CSFWSYSKRTMTGYWSTQGCRLLTTNKTHTTCSCNHLTNFAVLMAHVEVK) is GPS. The tract at residues 922–938 (TNFAVLMAHVEVKHSDA) is stachel. A helical transmembrane segment spans residues 949 to 969 (WVGILLSLVCLLICIFTFCFF). At 970-977 (RGLQSDRN) the chain is on the cytoplasmic side. A helical membrane pass occupies residues 978 to 998 (TIHKNLCISLFVAELLFLIGI). N-linked (GlcNAc...) asparagine glycosylation occurs at Asn999. At 999 to 1006 (NRTDQPIA) the chain is on the extracellular side. A helical membrane pass occupies residues 1007-1027 (CAVFAALLHFFFLAAFTWMFL). At 1028–1048 (EGVQLYIMLVEVFESEHSRRK) the chain is on the cytoplasmic side. Residues 1049 to 1069 (YFYLVGYGMPALIVAVSAAVD) form a helical membrane-spanning segment. Residues 1070–1087 (YRSYGTDKVCWLRLDTYF) lie on the Extracellular side of the membrane. Residues 1088 to 1108 (IWSFIGPATLIIMLNVIFLGI) traverse the membrane as a helical segment. Topologically, residues 1109 to 1141 (ALYKMFHHTAILKPESGCLDNINYEDNRPFIKS) are cytoplasmic. The chain crosses the membrane as a helical span at residues 1142-1162 (WVIGAIALLCLLGLTWAFGLM). Topologically, residues 1163 to 1168 (YINEST) are extracellular. Asn1165 carries an N-linked (GlcNAc...) asparagine glycan. The chain crosses the membrane as a helical span at residues 1169–1189 (VIMAYLFTIFNSLQGMFIFIF). Topologically, residues 1190 to 1550 (HCVLQKKVRK…KGPAHLVTSL (361 aa)) are cytoplasmic. The interval 1213–1236 (KSTESSIGSGKTSGSRTPGRYSTG) is disordered. The residue at position 1253 (Ser1253) is a Phosphoserine. Disordered stretches follow at residues 1410–1435 (LLPPRVYSTDNHQPHHYSRRRLPQDH) and 1528–1550 (PPNKDGASPEGTSKGPAHLVTSL). Ser1535 carries the post-translational modification Phosphoserine. The PDZ-binding signature appears at 1545–1550 (HLVTSL).

The protein belongs to the G-protein coupled receptor 2 family. LN-TM7 subfamily. Heterodimer of 2 chains generated by proteolytic processing; the large extracellular N-terminal fragment and the membrane-bound C-terminal fragment predominantly remain associated and non-covalently linked. Interacts (via olfactomedin-like domain) with FLRT1 (via extracellular domain). Interacts (via olfactomedin-like domain) with FLRT2 (via extracellular domain). Interacts (via olfactomedin-like domain) with FLRT3 (via extracellular domain); the interaction is direct. Interacts (via extracellular domain) with TENM1. Interacts (via extracellular domain) with TENM2. Interacts (via extracellular domain) with TENM3. Identified in a complex with FLRT3 and UNC5B; does not interact with UNC5B by itself. Identified in a complex with FLRT3 and UNC5D; does not interact with UNC5D by itself. As to quaternary structure, interacts (via PDZ-binding motif) with SHANK3. Interacts (via PDZ-binding motif) with DLG4. In terms of processing, autoproteolytically processed at the GPS region of the GAIN-B domain; this cleavage modulates receptor activity. Predominantly expressed in brain, followed by heart, placenta, pancreas, kidney and testis.

The protein resides in the cell membrane. It is found in the postsynaptic cell membrane. The protein localises to the cell projection. Its subcellular location is the axon. It localises to the cell junction. With respect to regulation, forms a heterodimer of 2 chains generated by proteolytic processing that remain associated through non-covalent interactions mediated by the GAIN-B domain. In the inactivated receptor, the Stachel sequence (also named stalk) is embedded in the GAIN-B domain, where it adopts a beta-strand conformation. On activation, the Stachel moves into the 7 transmembrane region and adopts a twisted hook-shaped configuration that forms contacts within the receptor, leading to coupling of a G-alpha protein, which activates signaling. The cleaved GAIN-B and N-terminal domains can then dissociate from the rest of the receptor. Its function is as follows. Orphan adhesion G-protein coupled receptor (aGPCR), which mediates synapse specificity. Ligand binding causes a conformation change that triggers signaling via guanine nucleotide-binding proteins (G proteins) and modulates the activity of downstream effectors. ADGRL3 is coupled with different classes of G alpha proteins, such as G(12)/G(13), G(s), G(i) or G(q), depending on the context. Coupling to G(12)/G(13) G proteins, which mediates the activation Rho small GTPases is the most efficient. Following G-protein coupled receptor activation, associates with cell adhesion molecules that are expressed at the surface of adjacent cells to direct synapse specificity. Specifically mediates the establishment of Schaffer-collateral synapses formed by CA3-region axons on CA1-region pyramidal neurons in the hippocampus. Localizes to postsynaptic spines in excitatory synapses in the S.oriens and S.radiatum and interacts with presynaptic cell adhesion molecules FLRT3 and TENM2, promoting synapse formation. Plays a role in the development of glutamatergic synapses in the cortex. Important in determining the connectivity rates between the principal neurons in the cortex. In terms of biological role, orphan adhesion G-protein coupled receptor (aGPCR), which mediates synapse specificity. Ligand binding causes a conformation change that triggers signaling via guanine nucleotide-binding proteins (G proteins) and modulates the activity of downstream effectors, such as adenylate cyclase. Isoform 1 is specifically coupled to G(s) G proteins and mediates activation of adenylate cyclase activity. Following G-protein coupled receptor activation, undergoes liquid-liquid phase transition, associates with (1) cell adhesion molecules that are expressed at the surface of adjacent cells, as well as (2) PDZ-containing proteins, such as SHANK3 and DLG4, in the cytoplasm to direct synapse formation. This chain is Adhesion G protein-coupled receptor L3, found in Rattus norvegicus (Rat).